The sequence spans 113 residues: MKNFALSCIKFYQNYISKILPKSCRYYPTCSEYAVWEFKNNDIFSALLATLARILRCNQLFKGGIDYPVIRKRFGSFSIFKRMEFSNIDFWFVPCKNSKFYVIKVLDSLKEKR.

The protein belongs to the UPF0161 family.

The protein resides in the cell inner membrane. In terms of biological role, could be involved in insertion of integral membrane proteins into the membrane. The chain is Putative membrane protein insertion efficiency factor from Campylobacter curvus (strain 525.92).